A 201-amino-acid chain; its full sequence is Small ribosomal subunit protein uS4c (201 aa).

Residues Leu-15–Tyr-44 are disordered. Residues Met-89–Gln-149 enclose the S4 RNA-binding domain.

This sequence belongs to the universal ribosomal protein uS4 family. Part of the 30S ribosomal subunit. Contacts protein S5. The interaction surface between S4 and S5 is involved in control of translational fidelity.

The protein resides in the plastid. It is found in the chloroplast. Functionally, one of the primary rRNA binding proteins, it binds directly to 16S rRNA where it nucleates assembly of the body of the 30S subunit. With S5 and S12 plays an important role in translational accuracy. This is Small ribosomal subunit protein uS4c (rps4) from Helianthus annuus (Common sunflower).